The following is a 323-amino-acid chain: MNFLSAVLTILSSFLITFLLMPSLIKYFRAKKEGQQIRKEGPTWHAKKAGTPTMGGLLFIFSAVVTILWVAAWQGLITNTLWALLFVLVVYGLIGMWDDSIKIFHHQNEGFKPWQKALCQVLAAMVFTVIYQHEGFQMGFGTTQIGWLYGLFIIFWIVGFSNAVNLTDGLDGLVSGLSIISFAAYLIIALVNLNQPGYPEIALFCLAMIGTLLGFFPYNHKPAKIFMGDMGSLAIGASLAAVSLLLHHEWSLLVIGIVYVCETASVILQVASFKTTGKRIFKMTPIHHHFEMSGWSEWKIDIVFWLVGLVAAIIAVTTILLVG.

Helical transmembrane passes span 5–25 (SAVL…PSLI), 57–77 (LLFI…QGLI), 81–101 (LWAL…DDSI), 118–138 (LCQV…GFQM), 140–160 (FGTT…IVGF), 173–193 (LVSG…LVNL), 196–216 (PGYP…LGFF), 225–247 (IFMG…LLLH), and 302–322 (IVFW…ILLV).

It belongs to the glycosyltransferase 4 family. MraY subfamily. Mg(2+) serves as cofactor.

It is found in the cell membrane. It carries out the reaction UDP-N-acetyl-alpha-D-muramoyl-L-alanyl-gamma-D-glutamyl-L-lysyl-D-alanyl-D-alanine + di-trans,octa-cis-undecaprenyl phosphate = Mur2Ac(oyl-L-Ala-gamma-D-Glu-L-Lys-D-Ala-D-Ala)-di-trans,octa-cis-undecaprenyl diphosphate + UMP. It functions in the pathway cell wall biogenesis; peptidoglycan biosynthesis. Functionally, catalyzes the initial step of the lipid cycle reactions in the biosynthesis of the cell wall peptidoglycan: transfers peptidoglycan precursor phospho-MurNAc-pentapeptide from UDP-MurNAc-pentapeptide onto the lipid carrier undecaprenyl phosphate, yielding undecaprenyl-pyrophosphoryl-MurNAc-pentapeptide, known as lipid I. The sequence is that of Phospho-N-acetylmuramoyl-pentapeptide-transferase from Limosilactobacillus reuteri (strain DSM 20016) (Lactobacillus reuteri).